The chain runs to 302 residues: Glutaminase (302 aa).

The substrate site is built by S61, N111, E155, N162, Y186, Y238, and V256.

Belongs to the glutaminase family. As to quaternary structure, homotetramer.

The enzyme catalyses L-glutamine + H2O = L-glutamate + NH4(+). This chain is Glutaminase, found in Pseudomonas putida (strain ATCC 700007 / DSM 6899 / JCM 31910 / BCRC 17059 / LMG 24140 / F1).